The sequence spans 344 residues: AA9 family lytic polysaccharide monooxygenase cel61A (344 aa).

The first 21 residues, 1–21 (MIQKLSNLLVTALAVATGVVG), serve as a signal peptide directing secretion. Residue histidine 22 participates in Cu(2+) binding. Disulfide bonds link cysteine 77-cysteine 198 and cysteine 118-cysteine 122. A glycan (N-linked (GlcNAc...) asparagine) is linked at asparagine 80. Histidine 107 serves as a coordination point for Cu(2+). Asparagine 158 is a glycosylation site (N-linked (GlcNAc...) asparagine). 2 residues coordinate O2: histidine 184 and glutamine 193. Tyrosine 195 lines the Cu(2+) pocket. The segment at 262 to 310 (ATASATVPGGGSGPTSRTTTTARTTQASSRPSSTPPATTSAPAGGPTQT) is disordered. Positions 275–310 (PTSRTTTTARTTQASSRPSSTPPATTSAPAGGPTQT) are enriched in low complexity. Residues 307 to 343 (PTQTLYGQCGGSGYSGPTRCAPPATCSTLNPYYAQCL) enclose the CBM1 domain.

It belongs to the polysaccharide monooxygenase AA9 family. Requires Cu(2+) as cofactor.

The protein localises to the secreted. It catalyses the reaction [(1-&gt;4)-beta-D-glucosyl]n+m + reduced acceptor + O2 = 4-dehydro-beta-D-glucosyl-[(1-&gt;4)-beta-D-glucosyl]n-1 + [(1-&gt;4)-beta-D-glucosyl]m + acceptor + H2O.. In terms of biological role, lytic polysaccharide monooxygenase (LPMO) that depolymerizes crystalline and amorphous polysaccharides via the oxidation of scissile alpha- or beta-(1-4)-glycosidic bonds, yielding C1 or C4 oxidation products. Catalysis by LPMOs requires the reduction of the active-site copper from Cu(II) to Cu(I) by a reducing agent and H(2)O(2) or O(2) as a cosubstrate. Shows activity on beta-glucan and amorphous cellulose. Does not show beta-1-3-glucanase, beta-1,6-glucanase, mannanase, xylanase, beta-1,3-galactosidase, amylase, pectinase, nor chitinase activities. The chain is AA9 family lytic polysaccharide monooxygenase cel61A from Hypocrea jecorina (Trichoderma reesei).